The primary structure comprises 1167 residues: Pesticidal crystal protein Cry1Ja (1167 aa).

It belongs to the delta endotoxin family.

Its function is as follows. Promotes colloidosmotic lysis by binding to the midgut epithelial cells of many lepidopteran larvae. The polypeptide is Pesticidal crystal protein Cry1Ja (cry1Ja) (Bacillus thuringiensis).